A 383-amino-acid polypeptide reads, in one-letter code: Chorismate synthase (383 aa).

Residues arginine 40 and arginine 46 each contribute to the NADP(+) site. Residues 128-130, glycine 291, 306-310, and arginine 332 contribute to the FMN site; these read RAS and KPIPT.

This sequence belongs to the chorismate synthase family. Homotetramer. FMNH2 is required as a cofactor.

It catalyses the reaction 5-O-(1-carboxyvinyl)-3-phosphoshikimate = chorismate + phosphate. It functions in the pathway metabolic intermediate biosynthesis; chorismate biosynthesis; chorismate from D-erythrose 4-phosphate and phosphoenolpyruvate: step 7/7. Functionally, catalyzes the anti-1,4-elimination of the C-3 phosphate and the C-6 proR hydrogen from 5-enolpyruvylshikimate-3-phosphate (EPSP) to yield chorismate, which is the branch point compound that serves as the starting substrate for the three terminal pathways of aromatic amino acid biosynthesis. This reaction introduces a second double bond into the aromatic ring system. This Moorella thermoacetica (strain ATCC 39073 / JCM 9320) protein is Chorismate synthase.